Reading from the N-terminus, the 132-residue chain is Nucleoid-associated protein EspR (132 aa).

The segment at residues Ile-38–Ser-50 is a DNA-binding region (H-T-H motif).

Homodimer. Binds DNA as a dimer of dimers.

It is found in the cytoplasm. The protein resides in the nucleoid. Virulence regulator that has both architectural and regulatory roles. Impacts cell wall functions and pathogenesis through regulation of multiple genes. This Mycobacterium tuberculosis (strain CDC 1551 / Oshkosh) protein is Nucleoid-associated protein EspR.